We begin with the raw amino-acid sequence, 345 residues long: GTPase Obg (345 aa).

The Obg domain occupies 1-158 (MFIDSVKITL…RLVRLELKLI (158 aa)). In terms of domain architecture, OBG-type G spans 159 to 339 (ADVGLVGFPN…LKFMLLEEIK (181 aa)). Residues 165–172 (GFPNVGKS), 190–194 (FTTLT), 212–215 (DIPG), 280–283 (SKSD), and 320–322 (SSL) contribute to the GTP site. Ser172 and Thr192 together coordinate Mg(2+).

This sequence belongs to the TRAFAC class OBG-HflX-like GTPase superfamily. OBG GTPase family. Monomer. Requires Mg(2+) as cofactor.

Its subcellular location is the cytoplasm. Functionally, an essential GTPase which binds GTP, GDP and possibly (p)ppGpp with moderate affinity, with high nucleotide exchange rates and a fairly low GTP hydrolysis rate. Plays a role in control of the cell cycle, stress response, ribosome biogenesis and in those bacteria that undergo differentiation, in morphogenesis control. The chain is GTPase Obg from Campylobacter jejuni subsp. doylei (strain ATCC BAA-1458 / RM4099 / 269.97).